The primary structure comprises 358 residues: Protein-glutamate methylesterase/protein-glutamine glutaminase 3 (358 aa).

One can recognise a Response regulatory domain in the interval lysine 2–leucine 118. Position 52 is a 4-aspartylphosphate (aspartate 52). The 171-residue stretch at asparagine 155–lysine 325 folds into the CheB-type methylesterase domain. Residues serine 167, histidine 194, and aspartate 291 contribute to the active site.

It belongs to the CheB family. Post-translationally, phosphorylated by CheA. Phosphorylation of the N-terminal regulatory domain activates the methylesterase activity.

It is found in the cytoplasm. The catalysed reaction is [protein]-L-glutamate 5-O-methyl ester + H2O = L-glutamyl-[protein] + methanol + H(+). It catalyses the reaction L-glutaminyl-[protein] + H2O = L-glutamyl-[protein] + NH4(+). Involved in chemotaxis. Part of a chemotaxis signal transduction system that modulates chemotaxis in response to various stimuli. Catalyzes the demethylation of specific methylglutamate residues introduced into the chemoreceptors (methyl-accepting chemotaxis proteins or MCP) by CheR. Also mediates the irreversible deamidation of specific glutamine residues to glutamic acid. This Vibrio cholerae serotype O1 (strain ATCC 39315 / El Tor Inaba N16961) protein is Protein-glutamate methylesterase/protein-glutamine glutaminase 3.